The sequence spans 144 residues: Putative low molecular weight protein-tyrosine-phosphatase (144 aa).

The active-site Nucleophile is the cysteine 9. The active site involves arginine 15. Aspartate 115 acts as the Proton donor in catalysis.

This sequence belongs to the low molecular weight phosphotyrosine protein phosphatase family.

The enzyme catalyses O-phospho-L-tyrosyl-[protein] + H2O = L-tyrosyl-[protein] + phosphate. The sequence is that of Putative low molecular weight protein-tyrosine-phosphatase from Klebsiella pneumoniae.